Consider the following 369-residue polypeptide: DNA replication and repair protein RecF (369 aa).

30 to 37 (GENGQGKT) contacts ATP.

This sequence belongs to the RecF family.

It is found in the cytoplasm. In terms of biological role, the RecF protein is involved in DNA metabolism; it is required for DNA replication and normal SOS inducibility. RecF binds preferentially to single-stranded, linear DNA. It also seems to bind ATP. The protein is DNA replication and repair protein RecF of Anaeromyxobacter sp. (strain Fw109-5).